Here is a 152-residue protein sequence, read N- to C-terminus: Large ribosomal subunit protein uL13 (152 aa).

Belongs to the universal ribosomal protein uL13 family. In terms of assembly, part of the 50S ribosomal subunit.

This protein is one of the early assembly proteins of the 50S ribosomal subunit, although it is not seen to bind rRNA by itself. It is important during the early stages of 50S assembly. This is Large ribosomal subunit protein uL13 from Wolbachia sp. subsp. Drosophila simulans (strain wRi).